The sequence spans 327 residues: Undecaprenyl-phosphate 4-deoxy-4-formamido-L-arabinose transferase (327 aa).

The Cytoplasmic segment spans residues 1–235 (MFDAAPIKKV…TCLTTTPLRL (235 aa)). Residues 236 to 256 (LSLLGSVIAIGGFSLSVLLIV) traverse the membrane as a helical segment. Residues 257-269 (LRLALGPQWAAEG) lie on the Periplasmic side of the membrane. Residues 270 to 290 (VFMLFAVLFTFIGAQFIGMGL) form a helical membrane-spanning segment. Residues 291–327 (LGEYIGRIYNDVRARPRYFVQQVIYPESTPFTEESHQ) lie on the Cytoplasmic side of the membrane.

Belongs to the glycosyltransferase 2 family.

Its subcellular location is the cell inner membrane. It catalyses the reaction UDP-4-deoxy-4-formamido-beta-L-arabinose + di-trans,octa-cis-undecaprenyl phosphate = 4-deoxy-4-formamido-alpha-L-arabinopyranosyl di-trans,octa-cis-undecaprenyl phosphate + UDP. It participates in glycolipid biosynthesis; 4-amino-4-deoxy-alpha-L-arabinose undecaprenyl phosphate biosynthesis; 4-amino-4-deoxy-alpha-L-arabinose undecaprenyl phosphate from UDP-4-deoxy-4-formamido-beta-L-arabinose and undecaprenyl phosphate: step 1/2. Its pathway is bacterial outer membrane biogenesis; lipopolysaccharide biosynthesis. Functionally, catalyzes the transfer of 4-deoxy-4-formamido-L-arabinose from UDP to undecaprenyl phosphate. The modified arabinose is attached to lipid A and is required for resistance to polymyxin and cationic antimicrobial peptides. In Salmonella dublin (strain CT_02021853), this protein is Undecaprenyl-phosphate 4-deoxy-4-formamido-L-arabinose transferase.